Here is a 135-residue protein sequence, read N- to C-terminus: Large ribosomal subunit protein uL16m (135 aa).

Belongs to the universal ribosomal protein uL16 family.

The protein localises to the mitochondrion. The sequence is that of Large ribosomal subunit protein uL16m (RPL16) from Prototheca wickerhamii.